The primary structure comprises 457 residues: Protein trichome birefringence-like 4 (457 aa).

Residues 19 to 37 (IFLTSLFFLSLFLLSSSSL) traverse the membrane as a helical; Signal-anchor for type II membrane protein segment. Residues 173-175 (GDS) carry the GDS motif motif. Residues 420–434 (DCSHWCLPGVPDSWN) carry the DCXHWCLPGXXDXWN motif motif.

It belongs to the PC-esterase family. TBL subfamily.

The protein localises to the membrane. Functionally, may act as a bridging protein that binds pectin and other cell wall polysaccharides. Probably involved in maintaining esterification of pectins. May be involved in the specific O-acetylation of cell wall polymers. The polypeptide is Protein trichome birefringence-like 4 (TBL4) (Arabidopsis thaliana (Mouse-ear cress)).